The following is a 720-amino-acid chain: Phenylalanine--tRNA ligase beta subunit, chloroplastic (720 aa).

A B5 domain is found at Asn-319–Ser-404. The Mg(2+) site is built by Asp-382, Asp-388, Glu-391, and Glu-392. The FDX-ACB domain maps to Ser-626 to Arg-719.

This sequence belongs to the phenylalanyl-tRNA synthetase beta subunit family. Type 1 subfamily. In terms of assembly, tetramer of two alpha and two beta subunits. The cofactor is Mg(2+).

Its subcellular location is the plastid. It is found in the chloroplast. It catalyses the reaction tRNA(Phe) + L-phenylalanine + ATP = L-phenylalanyl-tRNA(Phe) + AMP + diphosphate + H(+). The sequence is that of Phenylalanine--tRNA ligase beta subunit, chloroplastic (pheT) from Porphyra purpurea (Red seaweed).